A 179-amino-acid polypeptide reads, in one-letter code: ATP-dependent protease subunit HslV (179 aa).

T7 is an active-site residue. Residues G162, C165, and T168 each coordinate Na(+).

Belongs to the peptidase T1B family. HslV subfamily. In terms of assembly, a double ring-shaped homohexamer of HslV is capped on each side by a ring-shaped HslU homohexamer. The assembly of the HslU/HslV complex is dependent on binding of ATP.

The protein localises to the cytoplasm. The catalysed reaction is ATP-dependent cleavage of peptide bonds with broad specificity.. Allosterically activated by HslU binding. Its function is as follows. Protease subunit of a proteasome-like degradation complex believed to be a general protein degrading machinery. This is ATP-dependent protease subunit HslV from Bordetella petrii (strain ATCC BAA-461 / DSM 12804 / CCUG 43448).